The chain runs to 371 residues: Glutamate 5-kinase (371 aa).

Lys12 is a binding site for ATP. Substrate is bound by residues Ser52, Asp136, and Asn148. Residues 168–169 (SD) and 210–216 (TGGMRTK) each bind ATP. One can recognise a PUA domain in the interval 275–354 (QGEILVDEGA…EDIAEKFGYS (80 aa)).

It belongs to the glutamate 5-kinase family.

The protein resides in the cytoplasm. It carries out the reaction L-glutamate + ATP = L-glutamyl 5-phosphate + ADP. It participates in amino-acid biosynthesis; L-proline biosynthesis; L-glutamate 5-semialdehyde from L-glutamate: step 1/2. Its function is as follows. Catalyzes the transfer of a phosphate group to glutamate to form L-glutamate 5-phosphate. The polypeptide is Glutamate 5-kinase (Idiomarina loihiensis (strain ATCC BAA-735 / DSM 15497 / L2-TR)).